A 1648-amino-acid chain; its full sequence is Pleiotropic ABC efflux transporter of multiple drugs YBT1 (1648 aa).

A helical membrane pass occupies residues 28-48 (NYVPTTLVTISILILLHNFFI). Asn-72 is a glycosylation site (N-linked (GlcNAc...) asparagine). Transmembrane regions (helical) follow at residues 140 to 160 (VVIE…LSIE), 175 to 195 (PHVL…LNLN), 207 to 227 (NIWL…ILPF), and 250 to 270 (LNLV…LPVL). Asn-306 carries N-linked (GlcNAc...) asparagine glycosylation. 2 helical membrane-spanning segments follow: residues 352–372 (FLNL…SIFV) and 392–412 (MNLA…VAIC). Positions 361–674 (CFTTISAFSI…ISDMLSYLIQ (314 aa)) constitute an ABC transmembrane type-1 1 domain. Asn-471 carries N-linked (GlcNAc...) asparagine glycosylation. A run of 2 helical transmembrane segments spans residues 501 to 521 (ISEL…LTVS) and 523 to 543 (ILLY…TIII). The N-linked (GlcNAc...) asparagine glycan is linked to Asn-573. 2 helical membrane passes run 612 to 632 (VWCV…GCTF) and 643 to 662 (LTTP…RDPL). The ABC transporter 1 domain maps to 706–947 (LAFENVTLRW…GLLGEDENMK (242 aa)). Asn-710 is a glycosylation site (N-linked (GlcNAc...) asparagine). 741–748 (GATGSGKT) provides a ligand contact to ATP. N-linked (GlcNAc...) asparagine glycosylation is found at Asn-784 and Asn-798. A helical transmembrane segment spans residues 1012 to 1032 (MYGGWYTIVALASVFTAILCL). The 302-residue stretch at 1032 to 1333 (LQITQAWWIR…LVRQYSELEM (302 aa)) folds into the ABC transmembrane type-1 2 domain. The N-linked (GlcNAc...) asparagine glycan is linked to Asn-1042. Helical transmembrane passes span 1089 to 1109 (IAKF…IGSI), 1168 to 1188 (IQSV…ISYI), and 1191 to 1211 (AFFP…FFYL). Residue Asn-1255 is glycosylated (N-linked (GlcNAc...) asparagine). A run of 2 helical transmembrane segments spans residues 1282–1302 (LIGA…INNI) and 1305–1325 (GLAG…LWLV). Residues 1372-1622 (VEVNNLSLKY…KKSIFYNMCE (251 aa)) form the ABC transporter 2 domain. Asn-1376 is a glycosylation site (N-linked (GlcNAc...) asparagine). 1406–1413 (GRTGAGKS) provides a ligand contact to ATP. Residues Asn-1503, Asn-1524, and Asn-1573 are each glycosylated (N-linked (GlcNAc...) asparagine).

This sequence belongs to the ABC transporter superfamily. ABCC family. Conjugate transporter (TC 3.A.1.208) subfamily.

It localises to the membrane. In terms of biological role, pleiotropic ABC efflux transporter that might be involved in the resistance to azoles such as fluconazole. The sequence is that of Pleiotropic ABC efflux transporter of multiple drugs YBT1 from Candida glabrata (strain ATCC 2001 / BCRC 20586 / JCM 3761 / NBRC 0622 / NRRL Y-65 / CBS 138) (Yeast).